The following is a 67-amino-acid chain: Large ribosomal subunit protein bL35 (67 aa).

Belongs to the bacterial ribosomal protein bL35 family.

The chain is Large ribosomal subunit protein bL35 from Rickettsia prowazekii (strain Madrid E).